Reading from the N-terminus, the 411-residue chain is S-inosyl-L-homocysteine hydrolase (411 aa).

The substrate site is built by Asp-121 and Glu-146. 147 to 149 (TTT) is a binding site for NAD(+). Residues Lys-176 and Asp-180 each contribute to the substrate site. Residues Asn-181, 210–215 (GYGWCG), Glu-233, Asn-268, 289–291 (SGH), and Asn-335 each bind NAD(+).

This sequence belongs to the adenosylhomocysteinase family. NAD(+) serves as cofactor.

The protein localises to the cytoplasm. It carries out the reaction S-inosyl-L-homocysteine + H2O = L-homocysteine + inosine. Its pathway is amino-acid biosynthesis; S-adenosyl-L-methionine biosynthesis. Functionally, catalyzes the hydrolysis of S-inosyl-L-homocysteine (SIH) to L-homocysteine (Hcy) and inosine. Likely functions in a S-adenosyl-L-methionine (SAM) recycling pathway from S-adenosyl-L-homocysteine (SAH) produced from SAM-dependent methylation reactions. Can also catalyze the reverse reaction in vitro, i.e. the synthesis of SIH from Hcy and inosine. This Methanosarcina acetivorans (strain ATCC 35395 / DSM 2834 / JCM 12185 / C2A) protein is S-inosyl-L-homocysteine hydrolase.